We begin with the raw amino-acid sequence, 396 residues long: 1-deoxy-D-xylulose 5-phosphate reductoisomerase (396 aa).

The NADPH site is built by Thr13, Gly14, Ser15, Ile16, and Asn127. Lys128 contributes to the 1-deoxy-D-xylulose 5-phosphate binding site. Glu129 is a binding site for NADPH. Asp153 is a binding site for Mn(2+). Residues Ser154, Glu155, Ser184, and His207 each coordinate 1-deoxy-D-xylulose 5-phosphate. Glu155 provides a ligand contact to Mn(2+). Gly213 is an NADPH binding site. 1-deoxy-D-xylulose 5-phosphate-binding residues include Ser220, Asn225, Lys226, and Glu229. Glu229 is a binding site for Mn(2+).

This sequence belongs to the DXR family. Mg(2+) is required as a cofactor. Requires Mn(2+) as cofactor.

It carries out the reaction 2-C-methyl-D-erythritol 4-phosphate + NADP(+) = 1-deoxy-D-xylulose 5-phosphate + NADPH + H(+). It participates in isoprenoid biosynthesis; isopentenyl diphosphate biosynthesis via DXP pathway; isopentenyl diphosphate from 1-deoxy-D-xylulose 5-phosphate: step 1/6. Functionally, catalyzes the NADPH-dependent rearrangement and reduction of 1-deoxy-D-xylulose-5-phosphate (DXP) to 2-C-methyl-D-erythritol 4-phosphate (MEP). The protein is 1-deoxy-D-xylulose 5-phosphate reductoisomerase of Stutzerimonas stutzeri (strain A1501) (Pseudomonas stutzeri).